Reading from the N-terminus, the 393-residue chain is Small RNA 2'-O-methyltransferase (393 aa).

Positions 36, 55, 78, 83, 115, and 131 each coordinate S-adenosyl-L-methionine. Glu132, Glu135, His136, and His181 together coordinate Mg(2+). The interval 286–307 is disordered; that stretch reads HLPRRKEQAGERGDKPKDIGGS. Positions 290–305 are enriched in basic and acidic residues; it reads RKEQAGERGDKPKDIG.

Belongs to the methyltransferase superfamily. HEN1 family. The cofactor is Mg(2+).

Its subcellular location is the cytoplasm. The catalysed reaction is small RNA 3'-end nucleotide + S-adenosyl-L-methionine = small RNA 3'-end 2'-O-methylnucleotide + S-adenosyl-L-homocysteine + H(+). In terms of biological role, methyltransferase that adds a 2'-O-methyl group at the 3'-end of piRNAs, a class of 24 to 30 nucleotide RNAs that are generated by a Dicer-independent mechanism and are primarily derived from transposons and other repeated sequence elements. This probably protects the 3'-end of piRNAs from uridylation activity and subsequent degradation. Stabilization of piRNAs is essential for gametogenesis. This is Small RNA 2'-O-methyltransferase (HENMT1) from Homo sapiens (Human).